Here is a 417-residue protein sequence, read N- to C-terminus: Exodeoxyribonuclease 7 large subunit (417 aa).

Belongs to the XseA family. In terms of assembly, heterooligomer composed of large and small subunits.

It is found in the cytoplasm. It carries out the reaction Exonucleolytic cleavage in either 5'- to 3'- or 3'- to 5'-direction to yield nucleoside 5'-phosphates.. In terms of biological role, bidirectionally degrades single-stranded DNA into large acid-insoluble oligonucleotides, which are then degraded further into small acid-soluble oligonucleotides. This is Exodeoxyribonuclease 7 large subunit from Helicobacter hepaticus (strain ATCC 51449 / 3B1).